Consider the following 641-residue polypeptide: Threonine--tRNA ligase (641 aa).

Residues 1–61 (MIKISFFDNQ…KKNGNLEILT (61 aa)) enclose the TGS domain. Residues 240 to 538 (DHKKINKELD…LVEETKGVFP (299 aa)) form a catalytic region. Zn(2+) is bound by residues C334, H385, and H515.

The protein belongs to the class-II aminoacyl-tRNA synthetase family. In terms of assembly, homodimer. The cofactor is Zn(2+).

Its subcellular location is the cytoplasm. It catalyses the reaction tRNA(Thr) + L-threonine + ATP = L-threonyl-tRNA(Thr) + AMP + diphosphate + H(+). Catalyzes the attachment of threonine to tRNA(Thr) in a two-step reaction: L-threonine is first activated by ATP to form Thr-AMP and then transferred to the acceptor end of tRNA(Thr). Also edits incorrectly charged L-seryl-tRNA(Thr). This Aster yellows witches'-broom phytoplasma (strain AYWB) protein is Threonine--tRNA ligase.